Here is a 1187-residue protein sequence, read N- to C-terminus: Nicotinate dehydrogenase subunit B (1187 aa).

A helical transmembrane segment spans residues 764 to 784; the sequence is WWFGSLAGVFGAALGMLATAL. 3 Cytochrome c domains span residues 804–907, 949–1057, and 1075–1163; these read AMLE…MSQT, AQWN…SSLE, and VSLS…RHRF. The heme c site is built by Cys-818, Cys-821, His-822, Cys-964, Cys-967, His-968, Cys-1088, Cys-1091, and His-1092.

It depends on Mo-molybdopterin cytosine dinucleotide as a cofactor.

It is found in the membrane. It catalyses the reaction 2 Fe(III)-[cytochrome] + nicotinate + H2O = 2 Fe(II)-[cytochrome] + 6-hydroxynicotinate + 2 H(+). Its pathway is cofactor degradation; nicotinate degradation. Subunit of the two-component enzyme NicAB that mediates nicotinate hydroxylation, the first step in the aerobic nicotinate degradation pathway. Mediates conversion of nicotinate into 6-hydroxynicotinate (6HNA). The protein is Nicotinate dehydrogenase subunit B (nicB) of Pseudomonas putida (strain ATCC 47054 / DSM 6125 / CFBP 8728 / NCIMB 11950 / KT2440).